The sequence spans 467 residues: 3-isopropylmalate dehydratase large subunit (467 aa).

Residues Cys-347, Cys-408, and Cys-411 each coordinate [4Fe-4S] cluster.

The protein belongs to the aconitase/IPM isomerase family. LeuC type 1 subfamily. In terms of assembly, heterodimer of LeuC and LeuD. Requires [4Fe-4S] cluster as cofactor.

It catalyses the reaction (2R,3S)-3-isopropylmalate = (2S)-2-isopropylmalate. The protein operates within amino-acid biosynthesis; L-leucine biosynthesis; L-leucine from 3-methyl-2-oxobutanoate: step 2/4. In terms of biological role, catalyzes the isomerization between 2-isopropylmalate and 3-isopropylmalate, via the formation of 2-isopropylmaleate. This is 3-isopropylmalate dehydratase large subunit from Bordetella pertussis (strain Tohama I / ATCC BAA-589 / NCTC 13251).